Consider the following 361-residue polypeptide: MSLTKKKVLVGMSGGVDSSVAAYLLKEQGYEVIGATMQIWQEDKEVEEREGGCCSLSAVEDARRVCDKLDIPFYVLNFRDSFKKKVIEPFIQEYIDGRTPNPCIECNKHLKFDELLRKAQGIGVDYIATGHYAKIEKKDDRYMLIRSDDDRKDQTYALYNFTQDQLAHTLMPCGEYTKDRIREIAKEIGLAVHNKKDSEEICFISDNDHGKYILNAKPGAVKSGNFVDKSGNVLGKHKGIVYYTIGQRKGLGLSVGRPVFVTDINPRTNEVVIGAEEDIFKTELIAGDLNFITFDKLEKEIEVEAKIRYSAKPAKATIVPLKDGRVKVVFDEKQRAITKGQSVVFYNGNIVIGGGIIEAII.

ATP is bound by residues 11–18 (GMSGGVDS) and M37. C106 serves as the catalytic Nucleophile. A disulfide bridge connects residues C106 and C202. G130 provides a ligand contact to ATP. Positions 152-154 (KDQ) are interaction with tRNA. The active-site Cysteine persulfide intermediate is C202. The interval 308–309 (RY) is interaction with tRNA.

Belongs to the MnmA/TRMU family.

The protein resides in the cytoplasm. The enzyme catalyses S-sulfanyl-L-cysteinyl-[protein] + uridine(34) in tRNA + AH2 + ATP = 2-thiouridine(34) in tRNA + L-cysteinyl-[protein] + A + AMP + diphosphate + H(+). Catalyzes the 2-thiolation of uridine at the wobble position (U34) of tRNA, leading to the formation of s(2)U34. The sequence is that of tRNA-specific 2-thiouridylase MnmA from Clostridium botulinum (strain Alaska E43 / Type E3).